The primary structure comprises 94 residues: Small ubiquitin-related modifier 3 (94 aa).

A Glycyl lysine isopeptide (Lys-Gly) (interchain with G-Cter in SUMO) cross-link involves residue lysine 11. In terms of domain architecture, Ubiquitin-like spans 15-92; sequence DHINLKVAGQ…IDVFQQQTGG (78 aa). Glycine 92 participates in a covalent cross-link: Glycyl lysine isopeptide (Gly-Lys) (interchain with K-? in acceptor proteins). The propeptide occupies 93–94; it reads VC.

This sequence belongs to the ubiquitin family. SUMO subfamily. Interacts with sae2 and ube2i. Covalently attached to a number of proteins. In terms of processing, polymeric chains can be formed through Lys-11 cross-linking. Post-translationally, cleavage of precursor form by a sentrin-specific protease is necessary for function.

The protein resides in the cytoplasm. Its subcellular location is the nucleus. It localises to the PML body. Functionally, ubiquitin-like protein which can be covalently attached to target lysines either as a monomer or as a lysine-linked polymer. Does not seem to be involved in protein degradation and may function as an antagonist of ubiquitin in the degradation process. Plays a role in a number of cellular processes such as nuclear transport, DNA replication and repair, mitosis and signal transduction. Covalent attachment to its substrates requires prior activation by the E1 complex sae1-sae2 and linkage to the E2 enzyme ube2i. In Xenopus laevis (African clawed frog), this protein is Small ubiquitin-related modifier 3 (sumo3).